The primary structure comprises 542 residues: NXPE family member 4 (542 aa).

An N-terminal signal peptide occupies residues M1–F26. N91, N92, N159, and N223 each carry an N-linked (GlcNAc...) asparagine glycan.

It belongs to the NXPE family.

It is found in the secreted. The chain is NXPE family member 4 (Nxpe4) from Rattus norvegicus (Rat).